The following is a 320-amino-acid chain: Lipoyl synthase (320 aa).

Residues M1–K29 form a disordered region. The segment covering A19 to K29 has biased composition (basic and acidic residues). C59, C64, C70, C85, C89, C92, and S298 together coordinate [4Fe-4S] cluster. The Radical SAM core domain occupies W71–L287.

Belongs to the radical SAM superfamily. Lipoyl synthase family. It depends on [4Fe-4S] cluster as a cofactor.

It is found in the cytoplasm. The enzyme catalyses [[Fe-S] cluster scaffold protein carrying a second [4Fe-4S](2+) cluster] + N(6)-octanoyl-L-lysyl-[protein] + 2 oxidized [2Fe-2S]-[ferredoxin] + 2 S-adenosyl-L-methionine + 4 H(+) = [[Fe-S] cluster scaffold protein] + N(6)-[(R)-dihydrolipoyl]-L-lysyl-[protein] + 4 Fe(3+) + 2 hydrogen sulfide + 2 5'-deoxyadenosine + 2 L-methionine + 2 reduced [2Fe-2S]-[ferredoxin]. The protein operates within protein modification; protein lipoylation via endogenous pathway; protein N(6)-(lipoyl)lysine from octanoyl-[acyl-carrier-protein]: step 2/2. Functionally, catalyzes the radical-mediated insertion of two sulfur atoms into the C-6 and C-8 positions of the octanoyl moiety bound to the lipoyl domains of lipoate-dependent enzymes, thereby converting the octanoylated domains into lipoylated derivatives. The chain is Lipoyl synthase from Bartonella tribocorum (strain CIP 105476 / IBS 506).